A 287-amino-acid polypeptide reads, in one-letter code: Putative ABC transporter ATP-binding protein MM_1038 (287 aa).

One can recognise an ABC transporter domain in the interval 5–238; it reads LENISVFYSR…ENVPLPPVAS (234 aa). Residue 40–47 coordinates ATP; the sequence is GEKGAGKS.

The protein belongs to the ABC transporter superfamily.

It is found in the cell membrane. Functionally, probably part of an ABC transporter complex. Responsible for energy coupling to the transport system. In Methanosarcina mazei (strain ATCC BAA-159 / DSM 3647 / Goe1 / Go1 / JCM 11833 / OCM 88) (Methanosarcina frisia), this protein is Putative ABC transporter ATP-binding protein MM_1038.